The chain runs to 370 residues: Probable G-protein coupled receptor 85 (370 aa).

Residues 1 to 25 (MANYSHAADNILQNLSPLTAFLKLT) are Extracellular-facing. The N-linked (GlcNAc...) asparagine glycan is linked to Asn-3. The helical transmembrane segment at 26–46 (SLGFIIGVSVVGNLLISILLV) threads the bilayer. Residues 47–57 (KDKTLHRAPYY) lie on the Cytoplasmic side of the membrane. The helical transmembrane segment at 58–78 (FLLDLCCSDILRSAICFPFVF) threads the bilayer. Residues 79 to 96 (NSVKNGSTWTYGTLTCKV) lie on the Extracellular side of the membrane. Asn-83 carries N-linked (GlcNAc...) asparagine glycosylation. A disulfide bond links Cys-94 and Cys-172. The chain crosses the membrane as a helical span at residues 97 to 117 (IAFLGVLSCFHTAFMLFCISV). Over 118–137 (TRYLAIAHHRFYTKRLTFWT) the chain is Cytoplasmic. The helical transmembrane segment at 138–158 (CLAVICMVWTLSVAMAFPPVL) threads the bilayer. Residues 159–188 (DVGTYSFIREEDQCTFQHRSFRANDSLGFM) lie on the Extracellular side of the membrane. Asn-182 carries an N-linked (GlcNAc...) asparagine glycan. Residues 189–209 (LLLALILLATQLVYLKLIFFV) traverse the membrane as a helical segment. Topologically, residues 210–286 (HDRRKMKPVQ…FKMEKRISRM (77 aa)) are cytoplasmic. A helical transmembrane segment spans residues 287 to 307 (FYIMTFLFLTLWGPYLVACYW). Over 308 to 313 (RVFARG) the chain is Extracellular. Residues 314-334 (PVVPGGFLTAAVWMSFAQAGI) form a helical membrane-spanning segment. At 335–370 (NPFVCIFSNRELRRCFSTTLLYCRKSRLPREPYCVI) the chain is on the cytoplasmic side.

The protein belongs to the G-protein coupled receptor 1 family. Interacts with DLG4 and DLG3. As to expression, highly expressed in brain and testis. Lower levels in small intestine, placenta and spleen. In brain regions, detected in all regions tested, but somewhat lower levels in the corpus callosum, medulla and spinal cord.

It localises to the cell membrane. The protein resides in the endoplasmic reticulum. Its function is as follows. Orphan receptor. The polypeptide is Probable G-protein coupled receptor 85 (GPR85) (Homo sapiens (Human)).